We begin with the raw amino-acid sequence, 214 residues long: ATP phosphoribosyltransferase (214 aa).

Belongs to the ATP phosphoribosyltransferase family. Short subfamily. As to quaternary structure, heteromultimer composed of HisG and HisZ subunits.

The protein localises to the cytoplasm. The catalysed reaction is 1-(5-phospho-beta-D-ribosyl)-ATP + diphosphate = 5-phospho-alpha-D-ribose 1-diphosphate + ATP. The protein operates within amino-acid biosynthesis; L-histidine biosynthesis; L-histidine from 5-phospho-alpha-D-ribose 1-diphosphate: step 1/9. Its function is as follows. Catalyzes the condensation of ATP and 5-phosphoribose 1-diphosphate to form N'-(5'-phosphoribosyl)-ATP (PR-ATP). Has a crucial role in the pathway because the rate of histidine biosynthesis seems to be controlled primarily by regulation of HisG enzymatic activity. The polypeptide is ATP phosphoribosyltransferase (Marinobacter nauticus (strain ATCC 700491 / DSM 11845 / VT8) (Marinobacter aquaeolei)).